We begin with the raw amino-acid sequence, 196 residues long: Ribonuclease HII (196 aa).

One can recognise an RNase H type-2 domain in the interval arginine 9–glutamate 196. Aspartate 15, glutamate 16, and aspartate 107 together coordinate a divalent metal cation.

It belongs to the RNase HII family. Mn(2+) is required as a cofactor. Mg(2+) serves as cofactor.

The protein resides in the cytoplasm. It catalyses the reaction Endonucleolytic cleavage to 5'-phosphomonoester.. Endonuclease that specifically degrades the RNA of RNA-DNA hybrids. This chain is Ribonuclease HII, found in Aeromonas hydrophila subsp. hydrophila (strain ATCC 7966 / DSM 30187 / BCRC 13018 / CCUG 14551 / JCM 1027 / KCTC 2358 / NCIMB 9240 / NCTC 8049).